Reading from the N-terminus, the 325-residue chain is Ribosomal RNA small subunit methyltransferase C (325 aa).

It belongs to the methyltransferase superfamily. RsmC family. As to quaternary structure, monomer.

The protein localises to the cytoplasm. The enzyme catalyses guanosine(1207) in 16S rRNA + S-adenosyl-L-methionine = N(2)-methylguanosine(1207) in 16S rRNA + S-adenosyl-L-homocysteine + H(+). In terms of biological role, specifically methylates the guanine in position 1207 of 16S rRNA in the 30S particle. The sequence is that of Ribosomal RNA small subunit methyltransferase C from Alcanivorax borkumensis (strain ATCC 700651 / DSM 11573 / NCIMB 13689 / SK2).